The primary structure comprises 1730 residues: Myosin-7 (1730 aa).

One can recognise a Myosin N-terminal SH3-like domain in the interval 8–56; it reads TVGSHVWVEDPDDAWIDGEVEEVNSEEITVNCSGKTVVAKLNNVYPKDP. Residues 61-731 enclose the Myosin motor domain; that stretch reads LGVDDMTKLA…QMAEMDAHRA (671 aa). Residues 155–162 and 208–216 contribute to the ATP site; these read GESGAGKT and NNNSSRFGK. 4 actin-binding regions span residues 494–528, 530–553, 588–612, and 612–634; these read LIEK…YQTF, NHKR…AGDV, FPPL…KQQL, and LQSL…KPNN. 4 IQ domains span residues 757–786, 782–811, 831–850, and 853–882; these read LQAA…EAAS, REAA…SACS, RRAT…HQRY, and TKKA…AAKE. The stretch at 883-1224 forms a coiled coil; that stretch reads TGALQDAKTK…VSDMETAEQI (342 aa). A Dilute domain is found at 1327–1678; that stretch reads DRIVPVFGSA…ISNLKLLLTN (352 aa). 2 disordered regions span residues 1367–1387 and 1456–1520; these read QSST…FGRM and DSSV…SSEE. The span at 1456 to 1465 shows a compositional bias: low complexity; it reads DSSVVNSPSK. Basic and acidic residues predominate over residues 1475–1508; that stretch reads SSEENSPKKSSEENSPKESSGDKSPQKLSDDNSP.

It belongs to the TRAFAC class myosin-kinesin ATPase superfamily. Myosin family. Plant myosin class XI subfamily. Homodimer.

Its function is as follows. Myosin heavy chain that is required for the cell cycle-regulated transport of various organelles and proteins for their segregation. Functions by binding with its tail domain to receptor proteins on organelles and exerting force with its N-terminal motor domain against actin filaments, thereby transporting its cargo along polarized actin cables. This is Myosin-7 (XI-A) from Arabidopsis thaliana (Mouse-ear cress).